Consider the following 252-residue polypeptide: 5'-nucleotidase SurE (252 aa).

The a divalent metal cation site is built by Asp8, Asp9, Ser42, and Asn94.

It belongs to the SurE nucleotidase family. A divalent metal cation serves as cofactor.

It localises to the cytoplasm. The catalysed reaction is a ribonucleoside 5'-phosphate + H2O = a ribonucleoside + phosphate. Nucleotidase that shows phosphatase activity on nucleoside 5'-monophosphates. The sequence is that of 5'-nucleotidase SurE from Ehrlichia ruminantium (strain Gardel).